A 402-amino-acid chain; its full sequence is Metacaspase-1 (402 aa).

The tract at residues 1–79 is disordered; it reads MAYPGQGGHH…FAPPSGPIGP (79 aa). The span at 23 to 45 shows a compositional bias: low complexity; it reads PAPHGYAQPGYGYAPPSGPPQGY. Residues His-193 and Cys-249 contribute to the active site.

The protein belongs to the peptidase C14B family.

Functionally, involved in cell death (apoptosis). In Mycosarcoma maydis (Corn smut fungus), this protein is Metacaspase-1 (MCA1).